Here is a 209-residue protein sequence, read N- to C-terminus: Cytidylyl-2-hydroxypropylphosphonate hydrolase (209 aa).

Asn111, Asp127, Glu129, and Asp131 together coordinate a divalent metal cation. The active-site Proton donor is Lys144. Asp145 lines the a divalent metal cation pocket.

It belongs to the FomD family. Monomer in solution. The cofactor is Mn(2+). Co(2+) serves as cofactor.

The enzyme catalyses cytidine 5'-({hydroxy[(S)-2-hydroxypropyl]phosphonoyl}phosphate) + H2O = (S)-2-hydroxypropylphosphonate + CMP + H(+). The protein operates within antibiotic biosynthesis; fosfomycin biosynthesis. Hydrolysis of (S)-HPP-CMP is inhibited by CDP. Functionally, involved in fosfomycin biosynthesis. Catalyzes the hydrolysis of cytidylyl (S)-2-hydroxypropylphosphonate ((S)-HPP-CMP) to give (S)-2-hydroxypropylphosphonate ((S)-HPP) and CMP. Can also hydrolyze (R)-HPP-CMP and cytidylyl 2-hydroxyethylphosphonate (HEP-CMP), which is a biosynthetic intermediate before C-methylation, but the catalytic efficiency is much higher with (S)-HPP-CMP. The sequence is that of Cytidylyl-2-hydroxypropylphosphonate hydrolase from Streptomyces wedmorensis.